We begin with the raw amino-acid sequence, 488 residues long: Ribulose bisphosphate carboxylase large chain (488 aa).

Substrate contacts are provided by Asn127 and Thr177. Lys179 serves as the catalytic Proton acceptor. Residue Lys181 coordinates substrate. 3 residues coordinate Mg(2+): Lys205, Asp207, and Glu208. An N6-carboxylysine modification is found at Lys205. His297 functions as the Proton acceptor in the catalytic mechanism. The substrate site is built by Arg298, His330, and Ser382.

It belongs to the RuBisCO large chain family. Type I subfamily. Heterohexadecamer of 8 large chains and 8 small chains. Mg(2+) is required as a cofactor.

The protein localises to the plastid. Its subcellular location is the chloroplast. It carries out the reaction 2 (2R)-3-phosphoglycerate + 2 H(+) = D-ribulose 1,5-bisphosphate + CO2 + H2O. The enzyme catalyses D-ribulose 1,5-bisphosphate + O2 = 2-phosphoglycolate + (2R)-3-phosphoglycerate + 2 H(+). Functionally, ruBisCO catalyzes two reactions: the carboxylation of D-ribulose 1,5-bisphosphate, the primary event in carbon dioxide fixation, as well as the oxidative fragmentation of the pentose substrate in the photorespiration process. Both reactions occur simultaneously and in competition at the same active site. This Porphyra umbilicalis (Purple laver) protein is Ribulose bisphosphate carboxylase large chain (rbcL).